The following is a 907-amino-acid chain: Interference hedgehog (907 aa).

An N-terminal signal peptide occupies residues Met1 to Ala23. Residues Ala24–Pro709 lie on the Extracellular side of the membrane. 4 Ig-like C2-type domains span residues Pro42–Ser149, Gly152–Ala233, Pro252–Leu340, and Pro346–Asn433. 3 disulfides stabilise this stretch: Cys65/Cys127, Cys173/Cys221, and Cys276/Cys324. N-linked (GlcNAc...) asparagine glycans are attached at residues Asn101, Asn203, Asn300, and Asn355. Cys367 and Cys415 form a disulfide bridge. Positions Gly427–Val474 are disordered. A compositionally biased stretch (polar residues) spans Gln462 to Val474. Fibronectin type-III domains lie at Pro468–Gly578 and Val586–Pro681. An N-linked (GlcNAc...) asparagine glycan is attached at Asn473. Residues Arg504, Lys511, and Lys513 each coordinate heparin. 2 N-linked (GlcNAc...) asparagine glycosylation sites follow: Asn537 and Asn548. Residue Arg552 participates in heparin binding. Asn568 is a glycosylation site (N-linked (GlcNAc...) asparagine). A compositionally biased stretch (polar residues) spans Gly676 to Gln688. The disordered stretch occupies residues Gly676 to His701. An N-linked (GlcNAc...) asparagine glycan is attached at Asn702. Residues Met710–Leu730 traverse the membrane as a helical segment. At Cys731 to Val907 the chain is on the cytoplasmic side. Disordered regions lie at residues Ala780 to Asp805 and Met829 to Gly881. Low complexity-rich tracts occupy residues Gln781–Gln794 and Asn853–Gly863. Polar residues predominate over residues Leu865–Asn878.

It belongs to the immunoglobulin superfamily. IHOG family. In terms of assembly, homodimer. Heterotetramer; 2 iHog chains bind 2 hh chains when facilitated by heparin, heparin is required to promote high-affinity interactions between hh and iHog.

It localises to the membrane. In terms of biological role, mediates response to the active Hedgehog (Hh) protein signal in embryos, functioning upstream or at the level of patched (ptc). This is Interference hedgehog from Drosophila virilis (Fruit fly).